A 180-amino-acid polypeptide reads, in one-letter code: UPF0227 protein YE1706 (180 aa).

Belongs to the UPF0227 family.

The protein is UPF0227 protein YE1706 of Yersinia enterocolitica serotype O:8 / biotype 1B (strain NCTC 13174 / 8081).